Reading from the N-terminus, the 421-residue chain is Phosphoribosylamine--glycine ligase (421 aa).

The 207-residue stretch at 108 to 314 (KEIMVKYNVP…FAQNIDDIMM (207 aa)) folds into the ATP-grasp domain. 134-195 (IEEQGAPIVV…EEFLDGEEFS (62 aa)) is a binding site for ATP. Residues Glu284 and Asn286 each coordinate Mg(2+).

Belongs to the GARS family. The cofactor is Mg(2+). It depends on Mn(2+) as a cofactor.

It catalyses the reaction 5-phospho-beta-D-ribosylamine + glycine + ATP = N(1)-(5-phospho-beta-D-ribosyl)glycinamide + ADP + phosphate + H(+). It functions in the pathway purine metabolism; IMP biosynthesis via de novo pathway; N(1)-(5-phospho-D-ribosyl)glycinamide from 5-phospho-alpha-D-ribose 1-diphosphate: step 2/2. The protein is Phosphoribosylamine--glycine ligase of Streptococcus pyogenes serotype M3 (strain SSI-1).